The sequence spans 275 residues: COP9 signalosome complex subunit 7a (275 aa).

S2 carries the post-translational modification N-acetylserine. The 158-residue stretch at 2-159 (SAEVKVTGQN…QRLEVDYSIG (158 aa)) folds into the PCI domain. The stretch at 185–233 (LSGIEEQVSRANQHKEQQLGLKQQIESEVANLKKTIKVTTAAAAAATSQ) forms a coiled coil. Residues 228–275 (AAATSQDPEQHLTELREPASGTNQRQPSKKASKGKGLRGSAKIWSKSN) form a disordered region. The span at 235-244 (PEQHLTELRE) shows a compositional bias: basic and acidic residues. Residues 254 to 263 (PSKKASKGKG) show a composition bias toward basic residues.

Belongs to the CSN7/EIF3M family. CSN7 subfamily. In terms of assembly, component of the CSN complex, composed of COPS1/GPS1, COPS2, COPS3, COPS4, COPS5, COPS6, COPS7 (COPS7A or COPS7B), COPS8 and COPS9. In the complex, it probably interacts directly with COPS1, COPS2, COPS4, COPS5, COPS6 and COPS8. Interacts with PMF1. Interacts with the translation initiation factor EIF3S6. Interacts with CK2 and PKD. Interacts directly with ID3. Phosphorylated by CK2 and PKD kinases.

Its subcellular location is the cytoplasm. It is found in the nucleus. Functionally, component of the COP9 signalosome complex (CSN), a complex involved in various cellular and developmental processes. The CSN complex is an essential regulator of the ubiquitin (Ubl) conjugation pathway by mediating the deneddylation of the cullin subunits of SCF-type E3 ligase complexes, leading to decrease the Ubl ligase activity of SCF-type complexes such as SCF, CSA or DDB2. The complex is also involved in phosphorylation of p53/TP53, JUN, I-kappa-B-alpha/NFKBIA, ITPK1 and IRF8/ICSBP, possibly via its association with CK2 and PKD kinases. CSN-dependent phosphorylation of TP53 and JUN promotes and protects degradation by the Ubl system, respectively. The chain is COP9 signalosome complex subunit 7a (Cops7a) from Mus musculus (Mouse).